The primary structure comprises 201 residues: ADP-ribosylation factor-like protein 4D (201 aa).

Gly-2 is lipidated: N-myristoyl glycine. Residues Gly-28–Thr-35, Asp-76–Gln-80, and Asn-135–Asp-138 each bind GTP.

Belongs to the small GTPase superfamily. Arf family. In terms of assembly, interacts with CYTH2; the interaction is direct and ARL4D GTP-dependent. Does not interact with ARL4D.

It is found in the nucleus. It localises to the nucleolus. Its subcellular location is the cell membrane. The protein localises to the cytoplasm. Functionally, small GTP-binding protein which cycles between an inactive GDP-bound and an active GTP-bound form, and the rate of cycling is regulated by guanine nucleotide exchange factors (GEF) and GTPase-activating proteins (GAP). GTP-binding protein that does not act as an allosteric activator of the cholera toxin catalytic subunit. Recruits CYTH1, CYTH2, CYTH3 and CYTH4 to the plasma membrane in GDP-bound form. In Homo sapiens (Human), this protein is ADP-ribosylation factor-like protein 4D (ARL4D).